The chain runs to 661 residues: UvrABC system protein B (661 aa).

A Helicase ATP-binding domain is found at 25–182 (AGLSSKKRSQ…NDLINLQYER (158 aa)). Position 38-45 (38-45 (GITGSGKT)) interacts with ATP. The short motif at 91-114 (YYDYYQPEAYIARTDTFIEKDSSI) is the Beta-hairpin element. The Helicase C-terminal domain maps to 430–592 (QVEDLISEIQ…IIPKTINRAI (163 aa)). The UVR domain maps to 621 to 656 (KTHIDKLKKEMLKAASNLEFEQAVKLRDQLKTLEEA).

Belongs to the UvrB family. As to quaternary structure, forms a heterotetramer with UvrA during the search for lesions. Interacts with UvrC in an incision complex.

The protein localises to the cytoplasm. Functionally, the UvrABC repair system catalyzes the recognition and processing of DNA lesions. A damage recognition complex composed of 2 UvrA and 2 UvrB subunits scans DNA for abnormalities. Upon binding of the UvrA(2)B(2) complex to a putative damaged site, the DNA wraps around one UvrB monomer. DNA wrap is dependent on ATP binding by UvrB and probably causes local melting of the DNA helix, facilitating insertion of UvrB beta-hairpin between the DNA strands. Then UvrB probes one DNA strand for the presence of a lesion. If a lesion is found the UvrA subunits dissociate and the UvrB-DNA preincision complex is formed. This complex is subsequently bound by UvrC and the second UvrB is released. If no lesion is found, the DNA wraps around the other UvrB subunit that will check the other stand for damage. This is UvrABC system protein B from Rickettsia rickettsii (strain Sheila Smith).